Reading from the N-terminus, the 511-residue chain is Xylose import ATP-binding protein XylG (511 aa).

ABC transporter domains are found at residues 6–244 (LEMR…VGRE) and 261–506 (FEAR…IGKP). 38–45 (GENGAGKS) provides a ligand contact to ATP.

Belongs to the ABC transporter superfamily. Xylose importer (TC 3.A.1.2.4) family. The complex is composed of two ATP-binding proteins (XylG), two transmembrane proteins (XylH) and a solute-binding protein (XylF).

The protein localises to the cell inner membrane. It catalyses the reaction D-xylose(out) + ATP + H2O = D-xylose(in) + ADP + phosphate + H(+). Its function is as follows. Part of the ABC transporter complex XylFGH involved in xylose import. Responsible for energy coupling to the transport system. This is Xylose import ATP-binding protein XylG from Brucella suis biovar 1 (strain 1330).